A 282-amino-acid polypeptide reads, in one-letter code: 2-dehydro-3-deoxyphosphooctonate aldolase (282 aa).

The protein belongs to the KdsA family.

The protein localises to the cytoplasm. The enzyme catalyses D-arabinose 5-phosphate + phosphoenolpyruvate + H2O = 3-deoxy-alpha-D-manno-2-octulosonate-8-phosphate + phosphate. It participates in carbohydrate biosynthesis; 3-deoxy-D-manno-octulosonate biosynthesis; 3-deoxy-D-manno-octulosonate from D-ribulose 5-phosphate: step 2/3. Its pathway is bacterial outer membrane biogenesis; lipopolysaccharide biosynthesis. This is 2-dehydro-3-deoxyphosphooctonate aldolase from Shewanella pealeana (strain ATCC 700345 / ANG-SQ1).